The sequence spans 121 residues: Small ribosomal subunit protein uS13 (121 aa).

Residues 93–121 are disordered; that stretch reads RKGLPVRGQKTKTNARTRKGKRKTVGAKS.

It belongs to the universal ribosomal protein uS13 family. As to quaternary structure, part of the 30S ribosomal subunit. Forms a loose heterodimer with protein S19. Forms two bridges to the 50S subunit in the 70S ribosome.

Located at the top of the head of the 30S subunit, it contacts several helices of the 16S rRNA. In the 70S ribosome it contacts the 23S rRNA (bridge B1a) and protein L5 of the 50S subunit (bridge B1b), connecting the 2 subunits; these bridges are implicated in subunit movement. Contacts the tRNAs in the A and P-sites. This is Small ribosomal subunit protein uS13 from Campylobacter lari (strain RM2100 / D67 / ATCC BAA-1060).